A 441-amino-acid polypeptide reads, in one-letter code: Deoxyguanosinetriphosphate triphosphohydrolase-like protein (441 aa).

One can recognise an HD domain in the interval 62–255 (RLTHSLEAAQ…MELADDIAYG (194 aa)).

The protein belongs to the dGTPase family. Type 2 subfamily.

The protein is Deoxyguanosinetriphosphate triphosphohydrolase-like protein (dgt) of Vibrio cholerae serotype O1 (strain ATCC 39541 / Classical Ogawa 395 / O395).